Consider the following 312-residue polypeptide: Ribosomal RNA small subunit methyltransferase H (312 aa).

S-adenosyl-L-methionine-binding positions include 34–36 (AGH), Asp54, Phe81, Asp102, and Gln109.

It belongs to the methyltransferase superfamily. RsmH family.

Its subcellular location is the cytoplasm. The catalysed reaction is cytidine(1402) in 16S rRNA + S-adenosyl-L-methionine = N(4)-methylcytidine(1402) in 16S rRNA + S-adenosyl-L-homocysteine + H(+). Functionally, specifically methylates the N4 position of cytidine in position 1402 (C1402) of 16S rRNA. This Geobacter sp. (strain M21) protein is Ribosomal RNA small subunit methyltransferase H.